The sequence spans 142 residues: MKTFTATPETVTRDWFVVDADGKTLGRIATEIALRLRGKHKPEYTPHVDTGDYIIVINAEKVTVTGNKAQGKTYYSHSGFPGGIKQISFEKLQAHKPEMIIEKAVKGMLPKGPLGRAMFRKLKVYAGAEHNHAAQQPQVLDI.

The protein belongs to the universal ribosomal protein uL13 family. In terms of assembly, part of the 50S ribosomal subunit.

This protein is one of the early assembly proteins of the 50S ribosomal subunit, although it is not seen to bind rRNA by itself. It is important during the early stages of 50S assembly. The chain is Large ribosomal subunit protein uL13 from Shewanella oneidensis (strain ATCC 700550 / JCM 31522 / CIP 106686 / LMG 19005 / NCIMB 14063 / MR-1).